The primary structure comprises 150 residues: 3-hydroxyacyl-[acyl-carrier-protein] dehydratase FabZ (150 aa).

Residue His54 is part of the active site.

It belongs to the thioester dehydratase family. FabZ subfamily.

Its subcellular location is the cytoplasm. The catalysed reaction is a (3R)-hydroxyacyl-[ACP] = a (2E)-enoyl-[ACP] + H2O. Involved in unsaturated fatty acids biosynthesis. Catalyzes the dehydration of short chain beta-hydroxyacyl-ACPs and long chain saturated and unsaturated beta-hydroxyacyl-ACPs. This Psychromonas ingrahamii (strain DSM 17664 / CCUG 51855 / 37) protein is 3-hydroxyacyl-[acyl-carrier-protein] dehydratase FabZ.